The chain runs to 77 residues: Acyl carrier protein (77 aa).

Residues Ser2–Gly77 form the Carrier domain. The residue at position 37 (Ser37) is an O-(pantetheine 4'-phosphoryl)serine.

Belongs to the acyl carrier protein (ACP) family. In terms of processing, 4'-phosphopantetheine is transferred from CoA to a specific serine of apo-ACP by AcpS. This modification is essential for activity because fatty acids are bound in thioester linkage to the sulfhydryl of the prosthetic group.

The protein localises to the cytoplasm. The protein operates within lipid metabolism; fatty acid biosynthesis. Functionally, carrier of the growing fatty acid chain in fatty acid biosynthesis. The protein is Acyl carrier protein of Psychromonas ingrahamii (strain DSM 17664 / CCUG 51855 / 37).